A 192-amino-acid polypeptide reads, in one-letter code: Phosphoheptose isomerase (192 aa).

Residues 34–192 form the SIS domain; it reads LADALGNGKK…LEKRLFGERR (159 aa). 49–51 contacts substrate; that stretch reads NGG. Residues His-58 and Glu-62 each contribute to the Zn(2+) site. Residues Glu-62, 91 to 92, 117 to 119, Ser-122, and Gln-169 each bind substrate; these read ND and STS. Zn(2+) contacts are provided by Gln-169 and His-177.

It belongs to the SIS family. GmhA subfamily. As to quaternary structure, homotetramer. The cofactor is Zn(2+).

It is found in the cytoplasm. It catalyses the reaction 2 D-sedoheptulose 7-phosphate = D-glycero-alpha-D-manno-heptose 7-phosphate + D-glycero-beta-D-manno-heptose 7-phosphate. It functions in the pathway carbohydrate biosynthesis; D-glycero-D-manno-heptose 7-phosphate biosynthesis; D-glycero-alpha-D-manno-heptose 7-phosphate and D-glycero-beta-D-manno-heptose 7-phosphate from sedoheptulose 7-phosphate: step 1/1. Catalyzes the isomerization of sedoheptulose 7-phosphate in D-glycero-D-manno-heptose 7-phosphate. In Geotalea daltonii (strain DSM 22248 / JCM 15807 / FRC-32) (Geobacter daltonii), this protein is Phosphoheptose isomerase.